The chain runs to 205 residues: Protein PAXX (205 aa).

The region spanning 39 to 81 (FNLYVTDAAELWSTCFSPDSLARLKARFGLSGAEDIHSRFRAA) is the PISA domain. Thr147 carries the post-translational modification Phosphothreonine. Residues 147-159 (TITSPKKNTQPAG) are compositionally biased toward polar residues. Residues 147–205 (TITSPKKNTQPAGTQFLPELDHQRGSSGPGVRRRCPGESLINPGFKSKKPAAGVDFDET) are disordered. Ser150 is modified (phosphoserine). Positions 172–205 (SSGPGVRRRCPGESLINPGFKSKKPAAGVDFDET) are mediates interaction with XRCC5/Ku80 and XRCC6/Ku70 and association with the non-homologous end joining core complex. The short motif at 191-205 (FKSKKPAAGVDFDET) is the XLM element.

The protein belongs to the XRCC4-XLF family. PAXX subfamily. As to quaternary structure, homodimer. Interacts with the DNA-bound XRCC5/Ku80 and XRCC6/Ku70 heterodimer (Ku complex); the interaction is direct. Associated component of the non-homologous end joining (NHEJ) complex, composed of the core proteins PRKDC, LIG4, XRCC4, XRCC6/Ku70, XRCC5/Ku86 and NHEJ1/XLF. Interacts with POLL (DNA polymerase lambda); promoting POLL recruitment to double-strand breaks (DSBs) and stimulation of the end-filling activity of POLL. Phosphorylation may inhibit interaction with the DNA-bound XRCC5/Ku80 and XRCC6/Ku70 heterodimer (Ku complex).

Its subcellular location is the nucleus. It localises to the chromosome. Non-essential DNA repair protein involved in DNA non-homologous end joining (NHEJ); participates in double-strand break (DSB) repair and V(D)J recombination. May act as a scaffold required for accumulation of the Ku heterodimer, composed of XRCC5/Ku80 and XRCC6/Ku70, at double-strand break sites and promote the assembly and/or stability of the NHEJ machinery. Involved in NHEJ by promoting the ligation of blunt-ended DNA ends. Together with NHEJ1/XLF, collaborates with DNA polymerase lambda (POLL) to promote joining of non-cohesive DNA ends. Constitutes a non-essential component of classical NHEJ: has a complementary but distinct function with NHEJ1/XLF in DNA repair. The polypeptide is Protein PAXX (Mus musculus (Mouse)).